A 318-amino-acid chain; its full sequence is Acetyl-coenzyme A carboxylase carboxyl transferase subunit alpha (318 aa).

The CoA carboxyltransferase C-terminal domain maps to 43–293 (RSQTALRDLY…GDGIAAALKS (251 aa)).

It belongs to the AccA family. As to quaternary structure, acetyl-CoA carboxylase is a heterohexamer composed of biotin carboxyl carrier protein (AccB), biotin carboxylase (AccC) and two subunits each of ACCase subunit alpha (AccA) and ACCase subunit beta (AccD).

The protein resides in the cytoplasm. It catalyses the reaction N(6)-carboxybiotinyl-L-lysyl-[protein] + acetyl-CoA = N(6)-biotinyl-L-lysyl-[protein] + malonyl-CoA. The protein operates within lipid metabolism; malonyl-CoA biosynthesis; malonyl-CoA from acetyl-CoA: step 1/1. Functionally, component of the acetyl coenzyme A carboxylase (ACC) complex. First, biotin carboxylase catalyzes the carboxylation of biotin on its carrier protein (BCCP) and then the CO(2) group is transferred by the carboxyltransferase to acetyl-CoA to form malonyl-CoA. The sequence is that of Acetyl-coenzyme A carboxylase carboxyl transferase subunit alpha from Bartonella bacilliformis (strain ATCC 35685 / KC583 / Herrer 020/F12,63).